The primary structure comprises 231 residues: Demethylmenaquinone methyltransferase (231 aa).

S-adenosyl-L-methionine contacts are provided by residues Thr-62, Asp-80, 100-101, and Ser-117; that span reads DA.

The protein belongs to the class I-like SAM-binding methyltransferase superfamily. MenG/UbiE family.

The catalysed reaction is a 2-demethylmenaquinol + S-adenosyl-L-methionine = a menaquinol + S-adenosyl-L-homocysteine + H(+). The protein operates within quinol/quinone metabolism; menaquinone biosynthesis; menaquinol from 1,4-dihydroxy-2-naphthoate: step 2/2. Methyltransferase required for the conversion of demethylmenaquinol (DMKH2) to menaquinol (MKH2). The sequence is that of Demethylmenaquinone methyltransferase from Mycobacterium marinum (strain ATCC BAA-535 / M).